The chain runs to 792 residues: 5-methyltetrahydropteroyltriglutamate--homocysteine methyltransferase (792 aa).

5-methyltetrahydropteroyltri-L-glutamate contacts are provided by residues 16–19 and Lys112; that span reads RELK. L-homocysteine-binding positions include 432-434 and Glu485; that span reads IGS. L-methionine is bound by residues 432–434 and Glu485; that span reads IGS. 5-methyltetrahydropteroyltri-L-glutamate is bound by residues 516 to 517 and Trp562; that span reads RC. Asp600 is a binding site for L-homocysteine. Asp600 provides a ligand contact to L-methionine. Glu606 serves as a coordination point for 5-methyltetrahydropteroyltri-L-glutamate. Zn(2+)-binding residues include His642, Cys644, and Glu666. The active-site Proton donor is the His695. Residue Cys727 coordinates Zn(2+).

Belongs to the vitamin-B12 independent methionine synthase family. Zn(2+) is required as a cofactor.

It carries out the reaction 5-methyltetrahydropteroyltri-L-glutamate + L-homocysteine = tetrahydropteroyltri-L-glutamate + L-methionine. It participates in amino-acid biosynthesis; L-methionine biosynthesis via de novo pathway; L-methionine from L-homocysteine (MetE route): step 1/1. Its function is as follows. Catalyzes the transfer of a methyl group from 5-methyltetrahydrofolate to homocysteine resulting in methionine formation. The polypeptide is 5-methyltetrahydropteroyltriglutamate--homocysteine methyltransferase (Cupriavidus necator (Alcaligenes eutrophus)).